The following is an 810-amino-acid chain: Protein kinase C-binding protein NELL1 (810 aa).

Positions 1–21 are cleaved as a signal peptide; the sequence is MPMDLILVVWFCVCTARTVVG. 6 N-linked (GlcNAc...) asparagine glycosylation sites follow: Asn40, Asn53, Asn83, Asn224, Asn294, and Asn372. In terms of domain architecture, Laminin G-like spans 64–227; the sequence is EREIHAAPHV…TQCPNLNHTC (164 aa). A VWFC 1 domain is found at 271–332; that stretch reads KTCQVSGLLY…IAGQCCKVCR (62 aa). Disulfide bonds link Cys395/Cys407, Cys401/Cys416, and Cys418/Cys432. Residues Asp434, Ile435, and Glu437 each contribute to the Ca(2+) site. Residues 434 to 475 enclose the EGF-like 1; calcium-binding domain; that stretch reads DIDECAAKMHYCHANTVCVNLPGLYRCDCVPGYIRVDDFSCT. 15 disulfide bridges follow: Cys438-Cys451, Cys445-Cys460, Cys462-Cys474, Cys480-Cys493, Cys487-Cys502, Cys504-Cys515, Cys519-Cys529, Cys523-Cys535, Cys537-Cys546, Cys553-Cys566, Cys560-Cys575, Cys577-Cys594, Cys600-Cys613, Cys607-Cys622, and Cys624-Cys630. Residues Asn453, Leu454, and Leu457 each contribute to the Ca(2+) site. The 41-residue stretch at 476–516 folds into the EGF-like 2; calcium-binding domain; it reads EHDECGSGQHNCDENAICTNTVQGHSCTCKPGYVGNGTICR. A glycan (N-linked (GlcNAc...) asparagine) is linked at Asn511. The EGF-like 3 domain maps to 517 to 547; the sequence is AFCEEGCRYGGTCVAPNKCVCPSGFTGSHCE. Residues 549–587 enclose the EGF-like 4; calcium-binding domain; it reads DIDECSEGIIECHNHSRCVNLPGWYHCECRSGFHDDGTY. Residue Asn562 is glycosylated (N-linked (GlcNAc...) asparagine). The 36-residue stretch at 596-631 folds into the EGF-like 5; calcium-binding domain; sequence DIDECALRTHTCWNDSACINLAGGFDCLCPSGPSCS. Asn609 carries an N-linked (GlcNAc...) asparagine glycan. In terms of domain architecture, VWFC 2 spans 692–750; it reads SQCLDQNGHKLYRSGDNWTHSCQQCRCLEGEVDCWPLTCPNLSCEYTAILEGECCPRCV. N-linked (GlcNAc...) asparagine glycosylation is found at Asn708, Asn732, and Asn758.

Homotrimer. Binds to PKC beta-1. Interacts with ATRAID; the interaction promotes osteoblast cell differentiation and mineralization. Interacts with ROBO3.

It is found in the cytoplasm. It localises to the nucleus envelope. Its subcellular location is the secreted. Its function is as follows. Plays a role in the control of cell growth and differentiation. Promotes osteoblast cell differentiation and terminal mineralization. In Homo sapiens (Human), this protein is Protein kinase C-binding protein NELL1 (NELL1).